We begin with the raw amino-acid sequence, 327 residues long: Protoheme IX farnesyltransferase (327 aa).

A run of 8 helical transmembrane segments spans residues 35–55 (LIPLLLATTLGGMALSEGWPL), 60–80 (LVCTLGGGALASAAAGVLNCL), 106–126 (SAFIGAIACTLAAAMLLVSGV), 129–149 (LAAGLSLLGLCSYVLLYTALL), 157–177 (IVIGGVAGAIPPLVGAAAATG), 185–205 (WLFALVMVWTPAHFWALALLL), 234–254 (GWITVLLSSLGVFALPSGGAF), and 283–303 (AKALFRWSILYLFGVCLLLIL).

The protein belongs to the UbiA prenyltransferase family. Protoheme IX farnesyltransferase subfamily.

The protein localises to the cell inner membrane. It carries out the reaction heme b + (2E,6E)-farnesyl diphosphate + H2O = Fe(II)-heme o + diphosphate. It participates in porphyrin-containing compound metabolism; heme O biosynthesis; heme O from protoheme: step 1/1. Its function is as follows. Converts heme B (protoheme IX) to heme O by substitution of the vinyl group on carbon 2 of heme B porphyrin ring with a hydroxyethyl farnesyl side group. The sequence is that of Protoheme IX farnesyltransferase from Synechococcus sp. (strain CC9605).